The following is a 303-amino-acid chain: Recombination-associated protein RdgC (303 aa).

The protein belongs to the RdgC family.

Its subcellular location is the cytoplasm. The protein resides in the nucleoid. Functionally, may be involved in recombination. This is Recombination-associated protein RdgC from Shewanella piezotolerans (strain WP3 / JCM 13877).